The sequence spans 77 residues: Large ribosomal subunit protein bL28 (77 aa).

Belongs to the bacterial ribosomal protein bL28 family.

The sequence is that of Large ribosomal subunit protein bL28 from Delftia acidovorans (strain DSM 14801 / SPH-1).